We begin with the raw amino-acid sequence, 1159 residues long: Protocadherin-17 (1159 aa).

Residues 1 to 17 form the signal peptide; sequence MYLSICCCFLLWAPALT. 6 consecutive Cadherin domains span residues 18–132, 133–243, 244–351, 353–472, 473–583, and 589–695; these read LKNL…APSF, SSDQ…SPVF, EAPS…APSI, FVSV…PPRF, TKGL…APVI, and QNDT…VPRV. Residues 18–707 are Extracellular-facing; it reads LKNLNYSVPE…EQHHWDMSLP (690 aa). Asn-22 is a glycosylation site (N-linked (GlcNAc...) asparagine). A Cell attachment site motif is present at residues 186 to 188; the sequence is RGD. 6 N-linked (GlcNAc...) asparagine glycosylation sites follow: Asn-266, Asn-439, Asn-453, Asn-504, Asn-566, and Asn-590. Residues 708–728 traverse the membrane as a helical segment; the sequence is LIVTLSTISIILLAAMITIAV. Residues 729–1159 are Cytoplasmic-facing; that stretch reads KCKRENKEIR…RGNDPVAVRK (431 aa). 2 disordered regions span residues 858–909 and 1108–1132; these read NFPA…KGSC and SRDSSEMGAVLEQLDHPNRDLGRES. The span at 867–879 shows a compositional bias: polar residues; sequence GSRQQFVQSSSTF. Basic and acidic residues-rich tracts occupy residues 880–895 and 1120–1132; these read KDPERASLRDSGHGDS and QLDHPNRDLGRES.

The protein resides in the cell membrane. In terms of biological role, potential calcium-dependent cell-adhesion protein. This is Protocadherin-17 (PCDH17) from Homo sapiens (Human).